The chain runs to 292 residues: MEMO1 family protein PF1638 (292 aa).

It belongs to the MEMO1 family.

In Pyrococcus furiosus (strain ATCC 43587 / DSM 3638 / JCM 8422 / Vc1), this protein is MEMO1 family protein PF1638.